The following is a 530-amino-acid chain: Fusaric acid resistance protein FusA (530 aa).

An N-terminal signal peptide occupies residues 1–23 (MQSPATKGTLALAVLAVSLIMAG). Residue Cys-24 is the site of N-palmitoyl cysteine attachment. Residue Cys-24 is the site of S-diacylglycerol cysteine attachment. 2 disordered regions span residues 375-442 (NAGV…RQRA) and 476-530 (GVET…PAAR). Low complexity-rich tracts occupy residues 421–430 (RPQLPAVARR) and 494–530 (AAGAAAPAAASGAKPVAAAARPAQVAAAGAAGVPAAR).

This sequence belongs to the outer membrane factor (OMF) (TC 1.B.17) family.

It localises to the cell membrane. Its function is as follows. Involved in the resistance (detoxification) of the fungal toxin fusaric acid. This chain is Fusaric acid resistance protein FusA (fusA), found in Burkholderia cepacia (Pseudomonas cepacia).